The sequence spans 90 residues: Probable Fe(2+)-trafficking protein (90 aa).

It belongs to the Fe(2+)-trafficking protein family.

Its function is as follows. Could be a mediator in iron transactions between iron acquisition and iron-requiring processes, such as synthesis and/or repair of Fe-S clusters in biosynthetic enzymes. The polypeptide is Probable Fe(2+)-trafficking protein (Cupriavidus necator (strain ATCC 17699 / DSM 428 / KCTC 22496 / NCIMB 10442 / H16 / Stanier 337) (Ralstonia eutropha)).